The sequence spans 101 residues: Isochorismate pyruvate lyase (101 aa).

Positions 4 to 94 (PEDCTGLADI…WYIAEQIKYW (91 aa)) constitute a Chorismate mutase domain. 4 residues coordinate substrate: arginine 14, arginine 31, lysine 42, and glutamine 90.

Dimer of dimers.

It catalyses the reaction isochorismate = salicylate + pyruvate. It carries out the reaction chorismate = prephenate. The protein operates within siderophore biosynthesis; salicylate biosynthesis. Its activity is regulated as follows. Inhibited by endo-oxabicyclic diacid resembling to the conformation of the transition state. Its function is as follows. Involved in the incorporation of salicylate into the siderophore pyochelin. Catalyzes the elimination of the enolpyruvyl side chain from isochorismate to yield salicylate and pyruvate via a rare pericyclic hydrogen transfer mechanism from C2 to C5. PchB also catalyzes the nonphysiological Claisen rearrangement of chorismate to prephenate in which the pyruvylenol tail is transferred from a C3 ether linkage to a C1-C9 linkage. This Pseudomonas aeruginosa (strain ATCC 15692 / DSM 22644 / CIP 104116 / JCM 14847 / LMG 12228 / 1C / PRS 101 / PAO1) protein is Isochorismate pyruvate lyase.